The following is a 170-amino-acid chain: Large ribosomal subunit protein uL16 (170 aa).

It belongs to the universal ribosomal protein uL16 family.

This is Large ribosomal subunit protein uL16 from Methanospirillum hungatei JF-1 (strain ATCC 27890 / DSM 864 / NBRC 100397 / JF-1).